Reading from the N-terminus, the 498-residue chain is Elastase (498 aa).

The signal sequence occupies residues Met-1–Ala-23. A propeptide spanning residues Ala-24 to His-197 is cleaved from the precursor. Cys-227 and Cys-255 form a disulfide bridge. Position 236 is a phosphothreonine (Thr-236). A Ca(2+)-binding site is contributed by Asp-333. His-337 is a Zn(2+) binding site. Glu-338 is an active-site residue. Residues His-341 and Glu-361 each coordinate Zn(2+). Glu-369, Glu-372, Asp-380, and Leu-382 together coordinate Ca(2+). The active-site Proton donor is the His-420. The cysteines at positions 467 and 494 are disulfide-linked.

This sequence belongs to the peptidase M4 family. It depends on Ca(2+) as a cofactor. Zn(2+) is required as a cofactor. In terms of processing, made as a pre-pro-protein which is exported to the periplasm. Probably autocatalyzes cleavage of its pro-peptide. The pro-peptide can be secreted with mature elastase.

The protein resides in the secreted. It carries out the reaction Hydrolysis of proteins including elastin, collagen types III and IV, fibronectin and immunoglobulin A, generally with bulky hydrophobic group at P1'. Insulin B chain cleavage pattern identical to that of thermolysin, but specificity differs in other respects.. Cleaves host elastase, collagen, IgI and several complement components as well as endogenous pro-aminopeptidase, pro-chitin-binding protein (cbpD). Cleaves its own pro-peptide. Involved in the pathogenesis of P.aeruginosa infections. This Pseudomonas aeruginosa (strain UCBPP-PA14) protein is Elastase (lasB).